Here is a 239-residue protein sequence, read N- to C-terminus: Ribonuclease 3 (239 aa).

The 126-residue stretch at 12–137 (RLTLEAAIGH…LIAALYLDGG (126 aa)) folds into the RNase III domain. Mg(2+) is bound at residue Glu50. Residue Asp54 is part of the active site. Mg(2+)-binding residues include Asp123 and Glu126. Glu126 is an active-site residue. One can recognise a DRBM domain in the interval 162-231 (DAKTELQEWA…ATRILEREGI (70 aa)).

Belongs to the ribonuclease III family. As to quaternary structure, homodimer. Mg(2+) is required as a cofactor.

It is found in the cytoplasm. It catalyses the reaction Endonucleolytic cleavage to 5'-phosphomonoester.. Functionally, digests double-stranded RNA. Involved in the processing of primary rRNA transcript to yield the immediate precursors to the large and small rRNAs (23S and 16S). Processes some mRNAs, and tRNAs when they are encoded in the rRNA operon. Processes pre-crRNA and tracrRNA of type II CRISPR loci if present in the organism. The chain is Ribonuclease 3 from Rhizobium rhizogenes (strain K84 / ATCC BAA-868) (Agrobacterium radiobacter).